Reading from the N-terminus, the 234-residue chain is Ribonuclease HII (234 aa).

Residues 47 to 234 (IRIAGVDEVG…KTVHKILYQE (188 aa)) enclose the RNase H type-2 domain. The a divalent metal cation site is built by D53, E54, and D144.

This sequence belongs to the RNase HII family. Mn(2+) serves as cofactor. Mg(2+) is required as a cofactor.

The protein resides in the cytoplasm. The enzyme catalyses Endonucleolytic cleavage to 5'-phosphomonoester.. In terms of biological role, endonuclease that specifically degrades the RNA of RNA-DNA hybrids. The chain is Ribonuclease HII from Ruegeria pomeroyi (strain ATCC 700808 / DSM 15171 / DSS-3) (Silicibacter pomeroyi).